We begin with the raw amino-acid sequence, 280 residues long: RNA polymerase II holoenzyme cyclin-like subunit (280 aa).

One can recognise a Cyclin N-terminal domain in the interval 23–150 (ERRKGLEDIF…LIEELGTYLV (128 aa)).

This sequence belongs to the cyclin family. Cyclin C subfamily. Component of the SRB8-11 complex, a regulatory module of the Mediator complex.

The protein resides in the nucleus. In terms of biological role, component of the SRB8-11 complex. The SRB8-11 complex is a regulatory module of the Mediator complex which is itself involved in regulation of basal and activated RNA polymerase II-dependent transcription. The SRB8-11 complex may be involved in the transcriptional repression of a subset of genes regulated by Mediator. It may inhibit the association of the Mediator complex with RNA polymerase II to form the holoenzyme complex. The SRB8-11 complex phosphorylates the C-terminal domain (CTD) of the largest subunit of RNA polymerase II. The chain is RNA polymerase II holoenzyme cyclin-like subunit (SSN8) from Yarrowia lipolytica (strain CLIB 122 / E 150) (Yeast).